Consider the following 272-residue polypeptide: Large ribosomal subunit protein uL2 (272 aa).

Residues Gly-222–Ser-272 are disordered. Residues Lys-250–Asn-259 show a composition bias toward basic residues. The span at Arg-261 to Ser-272 shows a compositional bias: basic and acidic residues.

Belongs to the universal ribosomal protein uL2 family. In terms of assembly, part of the 50S ribosomal subunit. Forms a bridge to the 30S subunit in the 70S ribosome.

In terms of biological role, one of the primary rRNA binding proteins. Required for association of the 30S and 50S subunits to form the 70S ribosome, for tRNA binding and peptide bond formation. It has been suggested to have peptidyltransferase activity; this is somewhat controversial. Makes several contacts with the 16S rRNA in the 70S ribosome. The chain is Large ribosomal subunit protein uL2 from Baumannia cicadellinicola subsp. Homalodisca coagulata.